Consider the following 488-residue polypeptide: Glutamate--tRNA ligase (488 aa).

Residues 12 to 22 (PSPTGYMHVGN) carry the 'HIGH' region motif. Zn(2+) is bound by residues cysteine 109, cysteine 111, cysteine 136, and histidine 138. A 'KMSKS' region motif is present at residues 253–257 (KLSKR). Residue lysine 256 participates in ATP binding.

Belongs to the class-I aminoacyl-tRNA synthetase family. Glutamate--tRNA ligase type 1 subfamily. Monomer. Zn(2+) is required as a cofactor.

Its subcellular location is the cytoplasm. It catalyses the reaction tRNA(Glu) + L-glutamate + ATP = L-glutamyl-tRNA(Glu) + AMP + diphosphate. Functionally, catalyzes the attachment of glutamate to tRNA(Glu) in a two-step reaction: glutamate is first activated by ATP to form Glu-AMP and then transferred to the acceptor end of tRNA(Glu). The sequence is that of Glutamate--tRNA ligase from Clostridium tetani (strain Massachusetts / E88).